The sequence spans 226 residues: UPF0758 protein CHY_0341 (226 aa).

The 123-residue stretch at 104–226 (NFLNPDDVYN…YISMKAERLF (123 aa)) folds into the MPN domain. His175, His177, and Asp188 together coordinate Zn(2+). A JAMM motif motif is present at residues 175–188 (HNHPSGDPTPSKED).

This sequence belongs to the UPF0758 family.

This Carboxydothermus hydrogenoformans (strain ATCC BAA-161 / DSM 6008 / Z-2901) protein is UPF0758 protein CHY_0341.